The following is a 130-amino-acid chain: Small ribosomal subunit protein uS11 (130 aa).

It belongs to the universal ribosomal protein uS11 family. In terms of assembly, part of the 30S ribosomal subunit. Interacts with proteins S7 and S18. Binds to IF-3.

Functionally, located on the platform of the 30S subunit, it bridges several disparate RNA helices of the 16S rRNA. Forms part of the Shine-Dalgarno cleft in the 70S ribosome. This Buchnera aphidicola subsp. Schizaphis graminum (strain Sg) protein is Small ribosomal subunit protein uS11.